A 154-amino-acid polypeptide reads, in one-letter code: Transcriptional repressor NrdR (154 aa).

Residues 3 to 34 (CPTCKYNGTRVVDSRPADDGNSIRRRRECEKC) fold into a zinc finger. Positions 49–139 (LIVVKKDGAR…VYRQFKDISV (91 aa)) constitute an ATP-cone domain.

This sequence belongs to the NrdR family. It depends on Zn(2+) as a cofactor.

Functionally, negatively regulates transcription of bacterial ribonucleotide reductase nrd genes and operons by binding to NrdR-boxes. This Listeria welshimeri serovar 6b (strain ATCC 35897 / DSM 20650 / CCUG 15529 / CIP 8149 / NCTC 11857 / SLCC 5334 / V8) protein is Transcriptional repressor NrdR.